Here is a 554-residue protein sequence, read N- to C-terminus: Terpene synthase 17 (554 aa).

Positions 306, 310, and 458 each coordinate Mg(2+). The short motif at Asp-306–Asp-310 is the DDXXD motif element.

This sequence belongs to the terpene synthase family. Tpsa subfamily. It depends on Mg(2+) as a cofactor. Mn(2+) serves as cofactor.

The catalysed reaction is (2E,6E)-farnesyl diphosphate = (+)-valencene + diphosphate. It catalyses the reaction (2E,6E)-farnesyl diphosphate = (E)-beta-farnesene + diphosphate. It carries out the reaction (2E,6E)-farnesyl diphosphate = gamma-gurjunene + diphosphate. The enzyme catalyses (2Z,6Z)-farnesyl diphosphate = beta-bisabolene + diphosphate. The catalysed reaction is (2Z,6Z)-farnesyl diphosphate = (E)-gamma-bisabolene + diphosphate. It catalyses the reaction (2E)-geranyl diphosphate = limonene + diphosphate. It carries out the reaction (2E)-geranyl diphosphate = beta-myrcene + diphosphate. The enzyme catalyses (2E)-geranyl diphosphate = (E)-beta-ocimene + diphosphate. The catalysed reaction is (2E)-geranyl diphosphate = terpinolene + diphosphate. It catalyses the reaction (2E)-geranyl diphosphate = gamma-terpinene + diphosphate. It carries out the reaction (2Z,6Z)-farnesyl diphosphate = (Z)-gamma-bisabolene + diphosphate. The enzyme catalyses (2E,6E)-farnesyl diphosphate = (1S,5S,6R)-alpha-bergamotene + diphosphate. The catalysed reaction is (2Z,6Z)-farnesyl diphosphate = (1S,5S,6S)-alpha-bergamotene + diphosphate. It participates in secondary metabolite biosynthesis; terpenoid biosynthesis. In terms of biological role, sesquiterpene synthase involved in the biosynthesis of volatile compounds. Mediates the conversion of (2E,6E)-farnesyl diphosphate (FPP) into gamma-gurjunene, (E)-beta-farnesene and (+)-valencene, and of (2Z,6Z)-farnesyl diphosphate ((ZZ)-FPP) into (E)-alpha-bergamotene and (Z)-gamma-bisabolene as well as beta-bisabolene, (Z)-alpha-bergamotene and (E)-gamma-bisabolene to a lower extent. Can act with a low efficiency as a monoterpene synthase with geranyl diphosphate (GPP) as substrate, thus producing beta-myrcene, (E)-beta-ocimene, limonene, terpinolene, gamma-terpinene and (Z)-beta-ocimene. In Solanum habrochaites (Wild tomato), this protein is Terpene synthase 17.